Reading from the N-terminus, the 1069-residue chain is Carbamoyl phosphate synthase large chain (1069 aa).

The segment at 1-401 (MPLNKDIKKV…AFLKGIRSLE (401 aa)) is carboxyphosphate synthetic domain. The ATP site is built by arginine 129, arginine 169, glycine 175, glycine 176, lysine 208, valine 210, glutamate 215, glycine 241, isoleucine 242, histidine 243, glutamine 284, and glutamate 298. One can recognise an ATP-grasp 1 domain in the interval 133–327 (RDMMNRIGEP…IAKLAAKIAL (195 aa)). The Mg(2+) site is built by glutamine 284, glutamate 298, and asparagine 300. Residues glutamine 284, glutamate 298, and asparagine 300 each contribute to the Mn(2+) site. Residues 402–549 (IGKYSLDHNK…YSTYEQYDEV (148 aa)) form an oligomerization domain region. The tract at residues 550 to 932 (EVSNNKKVIV…ALYKGFVGAY (383 aa)) is carbamoyl phosphate synthetic domain. The 191-residue stretch at 674 to 864 (DELLERLGIS…IVDLATQVML (191 aa)) folds into the ATP-grasp 2 domain. 10 residues coordinate ATP: arginine 710, lysine 749, leucine 751, glutamate 755, glycine 780, valine 781, histidine 782, serine 783, glutamine 823, and glutamate 835. The Mg(2+) site is built by glutamine 823, glutamate 835, and asparagine 837. Mn(2+)-binding residues include glutamine 823, glutamate 835, and asparagine 837. The MGS-like domain occupies 932 to 1069 (YMYPSKEKGK…KDLEVFNIAK (138 aa)). Positions 933–1069 (MYPSKEKGKI…KDLEVFNIAK (137 aa)) are allosteric domain.

The protein belongs to the CarB family. In terms of assembly, composed of two chains; the small (or glutamine) chain promotes the hydrolysis of glutamine to ammonia, which is used by the large (or ammonia) chain to synthesize carbamoyl phosphate. Tetramer of heterodimers (alpha,beta)4. Mg(2+) serves as cofactor. Requires Mn(2+) as cofactor.

It carries out the reaction hydrogencarbonate + L-glutamine + 2 ATP + H2O = carbamoyl phosphate + L-glutamate + 2 ADP + phosphate + 2 H(+). The enzyme catalyses hydrogencarbonate + NH4(+) + 2 ATP = carbamoyl phosphate + 2 ADP + phosphate + 2 H(+). The protein operates within amino-acid biosynthesis; L-arginine biosynthesis; carbamoyl phosphate from bicarbonate: step 1/1. Its pathway is pyrimidine metabolism; UMP biosynthesis via de novo pathway; (S)-dihydroorotate from bicarbonate: step 1/3. In terms of biological role, large subunit of the glutamine-dependent carbamoyl phosphate synthetase (CPSase). CPSase catalyzes the formation of carbamoyl phosphate from the ammonia moiety of glutamine, carbonate, and phosphate donated by ATP, constituting the first step of 2 biosynthetic pathways, one leading to arginine and/or urea and the other to pyrimidine nucleotides. The large subunit (synthetase) binds the substrates ammonia (free or transferred from glutamine from the small subunit), hydrogencarbonate and ATP and carries out an ATP-coupled ligase reaction, activating hydrogencarbonate by forming carboxy phosphate which reacts with ammonia to form carbamoyl phosphate. This is Carbamoyl phosphate synthase large chain from Clostridium beijerinckii (strain ATCC 51743 / NCIMB 8052) (Clostridium acetobutylicum).